A 565-amino-acid chain; its full sequence is NAD-dependent malic enzyme (565 aa).

Tyr-104 functions as the Proton donor in the catalytic mechanism. Arg-157 contributes to the NAD(+) binding site. Lys-175 (proton acceptor) is an active-site residue. Glu-246, Asp-247, and Asp-270 together coordinate a divalent metal cation. Asp-270 and Asn-418 together coordinate NAD(+).

It belongs to the malic enzymes family. In terms of assembly, homotetramer. Requires Mg(2+) as cofactor. It depends on Mn(2+) as a cofactor.

It carries out the reaction (S)-malate + NAD(+) = pyruvate + CO2 + NADH. The catalysed reaction is oxaloacetate + H(+) = pyruvate + CO2. In Escherichia coli O9:H4 (strain HS), this protein is NAD-dependent malic enzyme.